The primary structure comprises 344 residues: Phosphoribosylformylglycinamidine cyclo-ligase (344 aa).

It belongs to the AIR synthase family.

The protein localises to the cytoplasm. The enzyme catalyses 2-formamido-N(1)-(5-O-phospho-beta-D-ribosyl)acetamidine + ATP = 5-amino-1-(5-phospho-beta-D-ribosyl)imidazole + ADP + phosphate + H(+). It participates in purine metabolism; IMP biosynthesis via de novo pathway; 5-amino-1-(5-phospho-D-ribosyl)imidazole from N(2)-formyl-N(1)-(5-phospho-D-ribosyl)glycinamide: step 2/2. The protein is Phosphoribosylformylglycinamidine cyclo-ligase of Anaeromyxobacter sp. (strain Fw109-5).